Reading from the N-terminus, the 152-residue chain is MPKRVQVVLNEDVLSLGKDGDLVEVAPGYARNFLLPFGKAVPVTPAVMKQVEHRRAKEAERQAALKQAALDFRTALDTIGRFTVKKQTGEDNVLFGTVTNGDVAEAIQDATKKEIDRRDIVVPEIHRTGKYSVTVKLHSEVTAEINLEVVSY.

Belongs to the bacterial ribosomal protein bL9 family.

Its function is as follows. Binds to the 23S rRNA. The chain is Large ribosomal subunit protein bL9 from Parasynechococcus marenigrum (strain WH8102).